The following is a 203-amino-acid chain: Orotate phosphoribosyltransferase (203 aa).

Residues arginine 94, lysine 98, histidine 100, and 120 to 128 (EDLISTGGS) each bind 5-phospho-alpha-D-ribose 1-diphosphate. Serine 124 provides a ligand contact to orotate.

Belongs to the purine/pyrimidine phosphoribosyltransferase family. PyrE subfamily. In terms of assembly, homodimer. Requires Mg(2+) as cofactor.

The catalysed reaction is orotidine 5'-phosphate + diphosphate = orotate + 5-phospho-alpha-D-ribose 1-diphosphate. Its pathway is pyrimidine metabolism; UMP biosynthesis via de novo pathway; UMP from orotate: step 1/2. Functionally, catalyzes the transfer of a ribosyl phosphate group from 5-phosphoribose 1-diphosphate to orotate, leading to the formation of orotidine monophosphate (OMP). The polypeptide is Orotate phosphoribosyltransferase (Staphylococcus aureus (strain COL)).